We begin with the raw amino-acid sequence, 212 residues long: Nucleoside triphosphate pyrophosphatase (212 aa).

Aspartate 79 acts as the Proton acceptor in catalysis.

Belongs to the Maf family. It depends on a divalent metal cation as a cofactor.

The protein resides in the cytoplasm. It catalyses the reaction a ribonucleoside 5'-triphosphate + H2O = a ribonucleoside 5'-phosphate + diphosphate + H(+). The catalysed reaction is a 2'-deoxyribonucleoside 5'-triphosphate + H2O = a 2'-deoxyribonucleoside 5'-phosphate + diphosphate + H(+). In terms of biological role, nucleoside triphosphate pyrophosphatase. May have a dual role in cell division arrest and in preventing the incorporation of modified nucleotides into cellular nucleic acids. The protein is Nucleoside triphosphate pyrophosphatase of Nocardia farcinica (strain IFM 10152).